An 879-amino-acid chain; its full sequence is Alanine--tRNA ligase (879 aa).

The segment at lysine 426–serine 449 is disordered. Positions 566, 570, 668, and 672 each coordinate Zn(2+).

The protein belongs to the class-II aminoacyl-tRNA synthetase family. It depends on Zn(2+) as a cofactor.

It localises to the cytoplasm. The enzyme catalyses tRNA(Ala) + L-alanine + ATP = L-alanyl-tRNA(Ala) + AMP + diphosphate. Catalyzes the attachment of alanine to tRNA(Ala) in a two-step reaction: alanine is first activated by ATP to form Ala-AMP and then transferred to the acceptor end of tRNA(Ala). Also edits incorrectly charged Ser-tRNA(Ala) and Gly-tRNA(Ala) via its editing domain. This chain is Alanine--tRNA ligase, found in Clostridioides difficile (strain 630) (Peptoclostridium difficile).